A 229-amino-acid polypeptide reads, in one-letter code: Large ribosomal subunit protein uL1 (229 aa).

This sequence belongs to the universal ribosomal protein uL1 family. As to quaternary structure, part of the 50S ribosomal subunit.

Binds directly to 23S rRNA. The L1 stalk is quite mobile in the ribosome, and is involved in E site tRNA release. In terms of biological role, protein L1 is also a translational repressor protein, it controls the translation of the L11 operon by binding to its mRNA. This Magnetococcus marinus (strain ATCC BAA-1437 / JCM 17883 / MC-1) protein is Large ribosomal subunit protein uL1.